We begin with the raw amino-acid sequence, 121 residues long: ORF8 protein (121 aa).

Positions 1-15 (MKFLVFLGIITTVAA) are cleaved as a signal peptide. The 103-residue stretch at 19 to 121 (ECSLQSCTQH…HDVRVVLDFI (103 aa)) folds into the SARS ORF8 Ig-like domain. 3 disulfides stabilise this stretch: Cys25/Cys90, Cys37/Cys102, and Cys61/Cys83. N-linked (GlcNAc...) (complex) asparagine; by host glycosylation occurs at Asn78.

In terms of assembly, homodimer. Interacts with host IL17RA. Interacts with host IL17RC. Interacts with host MHC-I. Post-translationally, glycosylated by the host when secreted via the conventional pathway. The glycosylated form cannot bind IL17A and would not participate in the cytokine storm.

It is found in the secreted. In terms of biological role, plays a role in modulating the host immune response. May act as a secreted virokine by mimicking interleukin-17A (IL17A), and thereby binding to the IL17RA receptor, leading to activation of the IL17 pathway and increased secretion of pro-inflammatory factors. Contributes to the cytokine storm during SARS-CoV-2 infection when secreted by unconventional pathway. May act by down-regulating major histocompability complex class I (MHC-I) at cell surface. May inhibit expression of some members of the IFN-stimulated gene (ISG) family including hosts IGF2BP1/ZBP1, MX1 and MX2, and DHX58. The sequence is that of ORF8 protein from Severe acute respiratory syndrome coronavirus 2 (2019-nCoV).